The chain runs to 1194 residues: Rho-associated protein kinase let-502 (1194 aa).

The Protein kinase domain occupies 68–330; sequence FRQLKVIGRG…VDEIRNHKFF (263 aa). ATP is bound by residues 74–82 and Lys97; that span reads IGRGAFGEV. Catalysis depends on Asp190, which acts as the Proton acceptor. The 72-residue stretch at 331-402 folds into the AGC-kinase C-terminal domain; the sequence is KNDEWTFETL…SNEYSPVKKL (72 aa). Coiled-coil stretches lie at residues 436–844 and 875–933; these read EEQY…MAKR and GRIL…EYPQ. Residues 784-846 enclose the RhoBD domain; sequence EQNLKHIENQ…LEEEMAKRQP (63 aa). Positions 961–1171 constitute a PH domain; sequence IQIDGWLSLR…SQLRRFIEAS (211 aa). The Phorbol-ester/DAG-type zinc finger occupies 1085 to 1138; the sequence is RHDFQELSYHTRTYCDDCGKKLSDFIRPTPAFECKNCHYKTHKEHIAQGTITMC.

It belongs to the protein kinase superfamily. AGC Ser/Thr protein kinase family. Interacts with rho-1. It depends on Mg(2+) as a cofactor.

It is found in the cytoplasm. The protein localises to the cytoskeleton. Its subcellular location is the cleavage furrow. It catalyses the reaction L-seryl-[protein] + ATP = O-phospho-L-seryl-[protein] + ADP + H(+). The catalysed reaction is L-threonyl-[protein] + ATP = O-phospho-L-threonyl-[protein] + ADP + H(+). With respect to regulation, activated by rho-1 binding. Functionally, negatively regulates mel-11 to relieve the inhibition of mlc-4, allowing contraction of the circumferentially oriented microfilaments in epidermal cells and thereby regulating myosin II contractility during spermathecal contraction, cleavage furrow contraction in early embryos, and embryonic elongation and morphogenesis. Required for P-cell migration. May also play a role in oocyte cellularization. In Caenorhabditis briggsae, this protein is Rho-associated protein kinase let-502.